Here is a 347-residue protein sequence, read N- to C-terminus: Phosphoribosylformylglycinamidine cyclo-ligase (347 aa).

This sequence belongs to the AIR synthase family.

The protein localises to the cytoplasm. The catalysed reaction is 2-formamido-N(1)-(5-O-phospho-beta-D-ribosyl)acetamidine + ATP = 5-amino-1-(5-phospho-beta-D-ribosyl)imidazole + ADP + phosphate + H(+). Its pathway is purine metabolism; IMP biosynthesis via de novo pathway; 5-amino-1-(5-phospho-D-ribosyl)imidazole from N(2)-formyl-N(1)-(5-phospho-D-ribosyl)glycinamide: step 2/2. The chain is Phosphoribosylformylglycinamidine cyclo-ligase from Alkaliphilus metalliredigens (strain QYMF).